The sequence spans 191 residues: uncharacterized protein (191 aa).

6 helical membrane passes run 4–24 (IYRQ…VLIF), 26–46 (KQLI…YFLC), 68–88 (GKGA…IDDI), 90–110 (AVFF…IIGI), 135–155 (LILY…SAFI), and 168–188 (LYLP…CSLM).

The protein resides in the cell membrane. This is an uncharacterized protein from Methanocaldococcus jannaschii (strain ATCC 43067 / DSM 2661 / JAL-1 / JCM 10045 / NBRC 100440) (Methanococcus jannaschii).